Consider the following 481-residue polypeptide: Protein hedgehog (481 aa).

Cysteine 93 carries the N-palmitoyl cysteine lipid modification. Positions 157, 158, 163, 193, 194, 197, and 199 each coordinate Ca(2+). Glycine 265 carries the Cholesterol glycine ester lipid modification.

Belongs to the hedgehog family. In terms of assembly, interacts with shf. Post-translationally, the C-terminal part of the hedgehog protein precursor displays an autoproteolysis activity that results in the cleavage of the full-length protein into two parts (N-product and C-product). In addition, the C-terminal part displays a cholesterol transferase activity that results by the covalent attachment of a cholesterol moiety to the C-terminal of the newly generated N-product. The N-product is the active species in both local and long-range signaling, whereas the C-product has no signaling activity. Cholesterylation is required for N-product targeting to lipid rafts and multimerization. In terms of processing, N-palmitoylation by Rasp of the hedgehog N-product, within the secretory pathway, is required for the embryonic and larval patterning activities of the hedgehog signal.

The protein resides in the nucleus. It is found in the cytoplasm. Its subcellular location is the cell membrane. The enzyme catalyses glycyl-L-cysteinyl-[protein] + cholesterol + H(+) = [protein]-C-terminal glycyl cholesterol ester + N-terminal L-cysteinyl-[protein]. Its function is as follows. The C-terminal part of the hedgehog protein precursor displays an autoproteolysis activity that results in the cleavage of the full-length protein into two parts (N-product and C-product). In addition, the C-terminal part displays a cholesterol transferase activity that results by the covalent attachment of a cholesterol moiety to the C-terminal of the newly generated N-product. Once cleaved, the C-product has no signaling activity and diffuses from the cell. The dually lipidated hedgehog protein N-product is a morphogen which is essential for a variety of patterning events during development. Establishes the anterior-posterior axis of the embryonic segments and patterns the larval imaginal disks. Binds to the patched (ptc) receptor, which functions in association with smoothened (smo), to activate the transcription of target genes wingless (wg), decapentaplegic (dpp) and ptc. In the absence of hh, ptc represses the constitutive signaling activity of smo through fused (fu). Essential component of a signaling pathway which regulates the Duox-dependent gut immune response to bacterial uracil; required to activate Cad99C-dependent endosome formation, norpA-dependent Ca2+ mobilization and p38 MAPK, which are essential steps in the Duox-dependent production of reactive oxygen species (ROS) in response to intestinal bacterial infection. During photoreceptor differentiation, it up-regulates transcription of Ubr3, which in turn promotes the hh-signaling pathway by mediating the ubiquitination and degradation of cos. The polypeptide is Protein hedgehog (hh-1) (Drosophila pseudoobscura pseudoobscura (Fruit fly)).